The primary structure comprises 228 residues: MSTSDAAATVIPIDDVPRQHGKAPAVDTVTAAPPPLAAAAPPAATTAPRKTRVPFFRRADRGSRCVALLDLVLRVAAFGPALAAAIATGTSDETLSVFTQFFQFHARFDDFPALLFFMVANAIAAGYLVLSLPFSAVVVLRPQAIGLRHLLLICDLIIAALLTAAAAAAAAIVDLAHSGNQRANWVPICMQFHGFCQRTSGAVVASFLAVLVLLFLVILAAFTIRKRC.

At 1–65 (MSTSDAAATV…FRRADRGSRC (65 aa)) the chain is on the cytoplasmic side. Residues 66 to 86 (VALLDLVLRVAAFGPALAAAI) form a helical membrane-spanning segment. The Extracellular segment spans residues 87–113 (ATGTSDETLSVFTQFFQFHARFDDFPA). A helical transmembrane segment spans residues 114–134 (LLFFMVANAIAAGYLVLSLPF). Residues 135–149 (SAVVVLRPQAIGLRH) are Cytoplasmic-facing. The chain crosses the membrane as a helical span at residues 150 to 170 (LLLICDLIIAALLTAAAAAAA). Topologically, residues 171–201 (AIVDLAHSGNQRANWVPICMQFHGFCQRTSG) are extracellular. The helical transmembrane segment at 202–222 (AVVASFLAVLVLLFLVILAAF) threads the bilayer. The Cytoplasmic segment spans residues 223-228 (TIRKRC).

Belongs to the Casparian strip membrane proteins (CASP) family. As to quaternary structure, homodimer and heterodimers.

It is found in the cell membrane. Its function is as follows. Regulates membrane-cell wall junctions and localized cell wall deposition. Required for establishment of the Casparian strip membrane domain (CSD) and the subsequent formation of Casparian strips, a cell wall modification of the root endodermis that determines an apoplastic barrier between the intraorganismal apoplasm and the extraorganismal apoplasm and prevents lateral diffusion. This is Casparian strip membrane protein 2 from Zea mays (Maize).